Reading from the N-terminus, the 105-residue chain is MAPAKNQENINQKLALVIKSGKYTLGYKSTIKSLRQGKAKLIIIAANTPVLRKSELEYYAMLSKTKVYYFQGGNNELGTAVGKLFRVGVVTVLDAGDSDILTTLA.

The protein belongs to the eukaryotic ribosomal protein eL30 family.

In Eremothecium gossypii (strain ATCC 10895 / CBS 109.51 / FGSC 9923 / NRRL Y-1056) (Yeast), this protein is Large ribosomal subunit protein eL30 (RPL30).